A 156-amino-acid polypeptide reads, in one-letter code: ATP synthase subunit b (156 aa).

The chain crosses the membrane as a helical span at residues 5–27; it reads ITLIGQMITFAIFVGFTMKFVWP.

The protein belongs to the ATPase B chain family. In terms of assembly, F-type ATPases have 2 components, F(1) - the catalytic core - and F(0) - the membrane proton channel. F(1) has five subunits: alpha(3), beta(3), gamma(1), delta(1), epsilon(1). F(0) has three main subunits: a(1), b(2) and c(10-14). The alpha and beta chains form an alternating ring which encloses part of the gamma chain. F(1) is attached to F(0) by a central stalk formed by the gamma and epsilon chains, while a peripheral stalk is formed by the delta and b chains.

The protein resides in the cell inner membrane. Its function is as follows. F(1)F(0) ATP synthase produces ATP from ADP in the presence of a proton or sodium gradient. F-type ATPases consist of two structural domains, F(1) containing the extramembraneous catalytic core and F(0) containing the membrane proton channel, linked together by a central stalk and a peripheral stalk. During catalysis, ATP synthesis in the catalytic domain of F(1) is coupled via a rotary mechanism of the central stalk subunits to proton translocation. In terms of biological role, component of the F(0) channel, it forms part of the peripheral stalk, linking F(1) to F(0). This is ATP synthase subunit b from Francisella philomiragia subsp. philomiragia (strain ATCC 25017 / CCUG 19701 / FSC 153 / O#319-036).